The sequence spans 279 residues: Ribosomal RNA small subunit methyltransferase A (279 aa).

S-adenosyl-L-methionine-binding residues include His-11, Leu-13, Gly-42, Glu-63, Asp-88, and Asn-104.

The protein belongs to the class I-like SAM-binding methyltransferase superfamily. rRNA adenine N(6)-methyltransferase family. RsmA subfamily.

Its subcellular location is the cytoplasm. The enzyme catalyses adenosine(1518)/adenosine(1519) in 16S rRNA + 4 S-adenosyl-L-methionine = N(6)-dimethyladenosine(1518)/N(6)-dimethyladenosine(1519) in 16S rRNA + 4 S-adenosyl-L-homocysteine + 4 H(+). In terms of biological role, specifically dimethylates two adjacent adenosines (A1518 and A1519) in the loop of a conserved hairpin near the 3'-end of 16S rRNA in the 30S particle. May play a critical role in biogenesis of 30S subunits. This chain is Ribosomal RNA small subunit methyltransferase A, found in Synechococcus sp. (strain JA-3-3Ab) (Cyanobacteria bacterium Yellowstone A-Prime).